A 454-amino-acid chain; its full sequence is Bifunctional protein GlmU (454 aa).

The interval 1–228 (MTLPLHVVIL…PQDVEGANDP (228 aa)) is pyrophosphorylase. Residues 10 to 13 (LAAG), Lys24, Gln76, 81 to 82 (GT), 103 to 105 (YGD), Gly138, Glu153, Asn168, and Asn226 each bind UDP-N-acetyl-alpha-D-glucosamine. Asp105 is a binding site for Mg(2+). Asn226 contributes to the Mg(2+) binding site. The segment at 229–249 (WQLAQLERAWQLRAARALCLQ) is linker. The interval 250–454 (GVRMADPARV…IEGWERPKKK (205 aa)) is N-acetyltransferase. UDP-N-acetyl-alpha-D-glucosamine is bound by residues Arg332 and Lys350. The active-site Proton acceptor is His362. UDP-N-acetyl-alpha-D-glucosamine contacts are provided by Tyr365 and Asn376. Acetyl-CoA contacts are provided by residues Ala379, 385 to 386 (NY), Ser404, Ala422, and Arg439.

It in the N-terminal section; belongs to the N-acetylglucosamine-1-phosphate uridyltransferase family. The protein in the C-terminal section; belongs to the transferase hexapeptide repeat family. Homotrimer. Requires Mg(2+) as cofactor.

Its subcellular location is the cytoplasm. It catalyses the reaction alpha-D-glucosamine 1-phosphate + acetyl-CoA = N-acetyl-alpha-D-glucosamine 1-phosphate + CoA + H(+). The enzyme catalyses N-acetyl-alpha-D-glucosamine 1-phosphate + UTP + H(+) = UDP-N-acetyl-alpha-D-glucosamine + diphosphate. It functions in the pathway nucleotide-sugar biosynthesis; UDP-N-acetyl-alpha-D-glucosamine biosynthesis; N-acetyl-alpha-D-glucosamine 1-phosphate from alpha-D-glucosamine 6-phosphate (route II): step 2/2. The protein operates within nucleotide-sugar biosynthesis; UDP-N-acetyl-alpha-D-glucosamine biosynthesis; UDP-N-acetyl-alpha-D-glucosamine from N-acetyl-alpha-D-glucosamine 1-phosphate: step 1/1. Its pathway is bacterial outer membrane biogenesis; LPS lipid A biosynthesis. Functionally, catalyzes the last two sequential reactions in the de novo biosynthetic pathway for UDP-N-acetylglucosamine (UDP-GlcNAc). The C-terminal domain catalyzes the transfer of acetyl group from acetyl coenzyme A to glucosamine-1-phosphate (GlcN-1-P) to produce N-acetylglucosamine-1-phosphate (GlcNAc-1-P), which is converted into UDP-GlcNAc by the transfer of uridine 5-monophosphate (from uridine 5-triphosphate), a reaction catalyzed by the N-terminal domain. This is Bifunctional protein GlmU from Xanthomonas campestris pv. campestris (strain B100).